The sequence spans 548 residues: Glucose-6-phosphate isomerase (548 aa).

The active-site Proton donor is Glu355. Active-site residues include His386 and Lys514.

The protein belongs to the GPI family.

The protein resides in the cytoplasm. It catalyses the reaction alpha-D-glucose 6-phosphate = beta-D-fructose 6-phosphate. It functions in the pathway carbohydrate biosynthesis; gluconeogenesis. It participates in carbohydrate degradation; glycolysis; D-glyceraldehyde 3-phosphate and glycerone phosphate from D-glucose: step 2/4. Its function is as follows. Catalyzes the reversible isomerization of glucose-6-phosphate to fructose-6-phosphate. The polypeptide is Glucose-6-phosphate isomerase (Yersinia enterocolitica serotype O:8 / biotype 1B (strain NCTC 13174 / 8081)).